Reading from the N-terminus, the 1122-residue chain is Midnolin homolog (1122 aa).

In terms of domain architecture, Ubiquitin-like spans 69–143 (INLNISTTTG…IILIPNVETG (75 aa)). Residues 210–300 (GGASGSSINA…SGQRSSGRIG (91 aa)) are required for interaction with Pc. Disordered stretches follow at residues 257 to 399 (VGGS…STLN), 596 to 630 (KHRH…HFFN), 645 to 677 (FATS…GAGA), 746 to 775 (GVVS…KSGS), 840 to 876 (APTT…RSKM), 886 to 905 (KCNS…ASGS), 922 to 955 (AATK…NGCT), and 1067 to 1122 (AAPA…DTAA). The span at 266–298 (SGTSSSSSSTSSSSSSSSSSSRTRSSGQRSSGR) shows a compositional bias: low complexity. Basic residues-rich tracts occupy residues 300 to 310 (GHGHVHSHQHP) and 321 to 352 (SHGH…HHHN). A compositionally biased stretch (low complexity) spans 375–397 (PSSSGASGSAPATGTGQSQSSST). Positions 596–610 (KHRHYHGQGHGHGHG) are enriched in basic residues. Low complexity-rich tracts occupy residues 612-627 (GHSS…SSSH), 648-663 (SSSS…SSSP), 746-766 (GVVS…AASG), 856-867 (SGSSSTTSSGSG), 889-903 (SRAQ…TLAS), and 922-936 (AATK…SSHS). Polar residues-rich tracts occupy residues 937–954 (CCQT…SNGC) and 1071–1085 (NSIT…VNGN). Residues 1086 to 1107 (TSTAPATAATSAAAAPTAAPPS) show a composition bias toward low complexity.

Interacts with PRC1 complex member polycomb protein Pc; the interaction targets Pc for ubiquitin-independent proteasomal degradation. Does not interact with PRC1 members Ph, Psc or Sce so does not appear to be a member of the PRC1 complex. Interacts with 26S proteasome regulatory subunit Rpn10.

The protein localises to the nucleus. Functionally, facilitates ubiquitin-independent proteasomal degradation of polycomb protein Pc by interacting directly with the proteasome and recruiting Pc to it. The polypeptide is Midnolin homolog (Drosophila melanogaster (Fruit fly)).